A 1349-amino-acid chain; its full sequence is DNA-directed RNA polymerase subunit beta' (1349 aa).

Zn(2+) contacts are provided by Cys219, Cys293, Cys300, and Cys303. The tract at residues 1298 to 1349 (LDSPTLGESGFGSRRAERSVLDDEDELIADEVVDDDDFEEEEEDDEDDFDDE) is disordered. The span at 1319–1349 (DDEDELIADEVVDDDDFEEEEEDDEDDFDDE) shows a compositional bias: acidic residues.

It belongs to the RNA polymerase beta' chain family. RpoC2 subfamily. As to quaternary structure, in cyanobacteria the RNAP catalytic core is composed of 2 alpha, 1 beta, 1 beta', 1 gamma and 1 omega subunit. When a sigma factor is associated with the core the holoenzyme is formed, which can initiate transcription. The cofactor is Zn(2+).

It carries out the reaction RNA(n) + a ribonucleoside 5'-triphosphate = RNA(n+1) + diphosphate. Functionally, DNA-dependent RNA polymerase catalyzes the transcription of DNA into RNA using the four ribonucleoside triphosphates as substrates. The sequence is that of DNA-directed RNA polymerase subunit beta' from Nostoc punctiforme (strain ATCC 29133 / PCC 73102).